Consider the following 1728-residue polypeptide: Hybrid PKS-NRPS synthetase TAS1 (1728 aa).

Residues 153–499 (SPLSKAQMAL…MDPTLLDFKV (347 aa)) form a condensation (C) domain region. Residues 608–1002 (KARAASQPDL…KLHIQGRIGN (395 aa)) form an adenylation (A) domain region. The Carrier domain occupies 1141–1219 (MLRRHLTAEV…KQVDCLMGIV (79 aa)). Ser1177 is modified (O-(pantetheine 4'-phosphoryl)serine). The interval 1225–1256 (LGSEPTGGSSSRSQSRRSAETSSSSTSAPSSV) is disordered. Low complexity-rich tracts occupy residues 1226–1237 (GSEPTGGSSSRS) and 1244–1255 (ETSSSSTSAPSS). Residues 1262–1714 (RNLYAIVGIS…SDATWFVIST (453 aa)) form the Ketosynthase family 3 (KS3) domain. Catalysis depends on for beta-ketoacyl synthase activity residues Cys1436, His1579, and Asn1633.

In the N-terminal section; belongs to the NRP synthetase family. The cofactor is pantetheine 4'-phosphate.

The enzyme catalyses acetoacetyl-CoA + L-isoleucine + ATP = tenuazonic acid + AMP + diphosphate + CoA + 2 H(+). Its function is as follows. Hybrid PKS-NRPS synthetase that mediates the biosynthesis of the toxin tenuazonic acid (TeA), an inhibitor of protein biosynthesis on ribosomes by suppressing the release of new protein. TAS1 alone is sufficient for TeA synthesis via the condensation of isoleucine (Ile) with acetoacetyl-CoA by the N-terminal NRPS module and subsequent cyclization conducted by the C-terminal KS domain. The sequence is that of Hybrid PKS-NRPS synthetase TAS1 from Pyricularia oryzae (strain 70-15 / ATCC MYA-4617 / FGSC 8958) (Rice blast fungus).